Here is a 137-residue protein sequence, read N- to C-terminus: Nucleoside diphosphate kinase (137 aa).

Residues Lys-9, Phe-57, Arg-85, Thr-91, Arg-102, and Asn-112 each contribute to the ATP site. The Pros-phosphohistidine intermediate role is filled by His-115.

The protein belongs to the NDK family. As to quaternary structure, homotetramer. Mg(2+) is required as a cofactor.

Its subcellular location is the cytoplasm. It catalyses the reaction a 2'-deoxyribonucleoside 5'-diphosphate + ATP = a 2'-deoxyribonucleoside 5'-triphosphate + ADP. The enzyme catalyses a ribonucleoside 5'-diphosphate + ATP = a ribonucleoside 5'-triphosphate + ADP. Its function is as follows. Major role in the synthesis of nucleoside triphosphates other than ATP. The ATP gamma phosphate is transferred to the NDP beta phosphate via a ping-pong mechanism, using a phosphorylated active-site intermediate. This is Nucleoside diphosphate kinase from Geotalea uraniireducens (strain Rf4) (Geobacter uraniireducens).